Consider the following 306-residue polypeptide: Curved DNA-binding protein (306 aa).

A J domain is found at 5–69 (DYYAIMGVKP…QRRAEYDQMW (65 aa)).

The protein resides in the cytoplasm. It localises to the nucleoid. In terms of biological role, DNA-binding protein that preferentially recognizes a curved DNA sequence. It is probably a functional analog of DnaJ; displays overlapping activities with DnaJ, but functions under different conditions, probably acting as a molecular chaperone in an adaptive response to environmental stresses other than heat shock. Lacks autonomous chaperone activity; binds native substrates and targets them for recognition by DnaK. Its activity is inhibited by the binding of CbpM. In Escherichia coli (strain SMS-3-5 / SECEC), this protein is Curved DNA-binding protein.